Reading from the N-terminus, the 54-residue chain is VHWTAEEKQIILAIWAKIDIEEAGAAALSRLLVVYPWTQRYFKNFGNLSSPTAI.

One can recognise a Globin domain in the interval 2-54; the sequence is HWTAEEKQIILAIWAKIDIEEAGAAALSRLLVVYPWTQRYFKNFGNLSSPTAI.

It belongs to the globin family.

In terms of biological role, hemoglobin omega chain is an embryonic-type beta-type chain found in prenatal and neonatal marsupials. The chain is Hemoglobin subunit omega from Notamacropus eugenii (Tammar wallaby).